A 339-amino-acid chain; its full sequence is Heat-inducible transcription repressor HrcA (339 aa).

It belongs to the HrcA family.

Functionally, negative regulator of class I heat shock genes (grpE-dnaK-dnaJ and groELS operons). Prevents heat-shock induction of these operons. This is Heat-inducible transcription repressor HrcA from Acidothermus cellulolyticus (strain ATCC 43068 / DSM 8971 / 11B).